The sequence spans 90 residues: DNA-directed RNA polymerase subunit Rpo5 (90 aa).

The protein belongs to the archaeal Rpo5/eukaryotic RPB5 RNA polymerase subunit family. In terms of assembly, part of the RNA polymerase complex.

It is found in the cytoplasm. It catalyses the reaction RNA(n) + a ribonucleoside 5'-triphosphate = RNA(n+1) + diphosphate. DNA-dependent RNA polymerase (RNAP) catalyzes the transcription of DNA into RNA using the four ribonucleoside triphosphates as substrates. This Aeropyrum pernix (strain ATCC 700893 / DSM 11879 / JCM 9820 / NBRC 100138 / K1) protein is DNA-directed RNA polymerase subunit Rpo5.